A 123-amino-acid polypeptide reads, in one-letter code: PTS-dependent dihydroxyacetone kinase, phosphotransferase subunit DhaM (123 aa).

The PTS EIIA type-4 domain maps to 2–123 (TYGIVIVSHS…EQLEKMLIEK (122 aa)). Histidine 10 serves as the catalytic Tele-phosphohistidine intermediate; for EIIA activity.

As to quaternary structure, homodimer. The dihydroxyacetone kinase complex is composed of a homodimer of DhaM, a homodimer of DhaK and the subunit DhaL.

It catalyses the reaction dihydroxyacetone + phosphoenolpyruvate = dihydroxyacetone phosphate + pyruvate. It participates in polyol metabolism; glycerol degradation. Its function is as follows. Component of the dihydroxyacetone kinase complex, which is responsible for the phosphoenolpyruvate (PEP)-dependent phosphorylation of dihydroxyacetone. DhaM serves as the phosphoryl donor. Is phosphorylated by phosphoenolpyruvate in an EI- and HPr-dependent reaction, and a phosphorelay system on histidine residues finally leads to phosphoryl transfer to DhaL and dihydroxyacetone. This Lactococcus lactis subsp. lactis (strain IL1403) (Streptococcus lactis) protein is PTS-dependent dihydroxyacetone kinase, phosphotransferase subunit DhaM.